The following is a 206-amino-acid chain: uncharacterized protein (206 aa).

A helical membrane pass occupies residues 4–24; it reads LLVVIAVALFIAAIVVLVVAI.

Its subcellular location is the membrane. This is an uncharacterized protein from Mycobacterium tuberculosis (strain CDC 1551 / Oshkosh).